The sequence spans 85 residues: UPF0181 protein YPTS_1774 (85 aa).

The span at 57 to 72 (DHDFDEHTESDYRRDD) shows a compositional bias: basic and acidic residues. The disordered stretch occupies residues 57–85 (DHDFDEHTESDYRRDDEPDADDIEDLYEG). Positions 73–85 (EPDADDIEDLYEG) are enriched in acidic residues.

This sequence belongs to the UPF0181 family.

The sequence is that of UPF0181 protein YPTS_1774 from Yersinia pseudotuberculosis serotype IB (strain PB1/+).